A 472-amino-acid polypeptide reads, in one-letter code: MGGKTLYDKLWDDHLVQQRDDGSALLYIDRHIVHEVTSPQAFEGLRLAKRKPWRVDSVVATPDHNVPTTQKERASGVEGIEDPTSRIQVQTLDSNCDELGILEFKINDARQGIVHVVGPETGACLPGMTIVCGDSHTSTNGALGALAMGIGTSEVEHVLATQCLVAKKMKSMLVKVDGKLGAGVTPKDVVLAIIGKIGTAGGTGYAIEFGGEVMRSMSMEGRLTVCNMAIEAGARAGMVAVDDITIDYVKGRSFAPKGEHWEQAVAAWRDLKSDDDAVFDAVVELRGEEILPQVSWGTSPEMVLPVDASIPDPELETDAVKQNGMRRALQYMGLKAGQAIKDIYVDRVFIGSCTNSRIEDIRAAAEVVKGRTKAASVKEAIVVPGSGAVKAQAEAEGLDKIFVEAGLEWREPGCSMCLAMNADKLGDGEHCASTSNRNFEGRQGYGGRTHLVSPAMAAAAAIAGHFVDVREF.

The disordered stretch occupies residues 61-80 (TPDHNVPTTQKERASGVEGI). Positions 353, 414, and 417 each coordinate [4Fe-4S] cluster.

The protein belongs to the aconitase/IPM isomerase family. LeuC type 1 subfamily. In terms of assembly, heterodimer of LeuC and LeuD. The cofactor is [4Fe-4S] cluster.

It catalyses the reaction (2R,3S)-3-isopropylmalate = (2S)-2-isopropylmalate. The protein operates within amino-acid biosynthesis; L-leucine biosynthesis; L-leucine from 3-methyl-2-oxobutanoate: step 2/4. In terms of biological role, catalyzes the isomerization between 2-isopropylmalate and 3-isopropylmalate, via the formation of 2-isopropylmaleate. In Saccharophagus degradans (strain 2-40 / ATCC 43961 / DSM 17024), this protein is 3-isopropylmalate dehydratase large subunit.